A 207-amino-acid chain; its full sequence is Proteasome subunit beta (207 aa).

Residues 1–9 (MSNKNTFEG) constitute a propeptide, removed in mature form; by autocatalysis. T10 acts as the Nucleophile in catalysis.

The protein belongs to the peptidase T1B family. In terms of assembly, the 20S proteasome core is composed of 14 alpha and 14 beta subunits that assemble into four stacked heptameric rings, resulting in a barrel-shaped structure. The two inner rings, each composed of seven catalytic beta subunits, are sandwiched by two outer rings, each composed of seven alpha subunits. The catalytic chamber with the active sites is on the inside of the barrel. Has a gated structure, the ends of the cylinder being occluded by the N-termini of the alpha-subunits. Is capped at one or both ends by the proteasome regulatory ATPase, PAN.

The protein resides in the cytoplasm. The catalysed reaction is Cleavage of peptide bonds with very broad specificity.. Its activity is regulated as follows. The formation of the proteasomal ATPase PAN-20S proteasome complex, via the docking of the C-termini of PAN into the intersubunit pockets in the alpha-rings, triggers opening of the gate for substrate entry. Interconversion between the open-gate and close-gate conformations leads to a dynamic regulation of the 20S proteasome proteolysis activity. Functionally, component of the proteasome core, a large protease complex with broad specificity involved in protein degradation. The chain is Proteasome subunit beta from Methanobrevibacter ruminantium (strain ATCC 35063 / DSM 1093 / JCM 13430 / OCM 146 / M1) (Methanobacterium ruminantium).